Here is a 78-residue protein sequence, read N- to C-terminus: Acyl carrier protein (78 aa).

The Carrier domain occupies 2–77 (SDTADRVKKI…DAIKYIDENK (76 aa)). Position 37 is an O-(pantetheine 4'-phosphoryl)serine (serine 37).

The protein belongs to the acyl carrier protein (ACP) family. Post-translationally, 4'-phosphopantetheine is transferred from CoA to a specific serine of apo-ACP by AcpS. This modification is essential for activity because fatty acids are bound in thioester linkage to the sulfhydryl of the prosthetic group.

Its subcellular location is the cytoplasm. It participates in lipid metabolism; fatty acid biosynthesis. Carrier of the growing fatty acid chain in fatty acid biosynthesis. This is Acyl carrier protein from Novosphingobium aromaticivorans (strain ATCC 700278 / DSM 12444 / CCUG 56034 / CIP 105152 / NBRC 16084 / F199).